The following is a 150-amino-acid chain: Protein Smg homolog (150 aa).

The protein belongs to the Smg family.

The polypeptide is Protein Smg homolog (Leptothrix cholodnii (strain ATCC 51168 / LMG 8142 / SP-6) (Leptothrix discophora (strain SP-6))).